A 236-amino-acid chain; its full sequence is Small ribosomal subunit protein uS2c (236 aa).

Belongs to the universal ribosomal protein uS2 family.

Its subcellular location is the plastid. The protein resides in the chloroplast. The chain is Small ribosomal subunit protein uS2c (rps2) from Nandina domestica (Heavenly bamboo).